A 352-amino-acid polypeptide reads, in one-letter code: Fe-S cluster assembly protein DRE2 (352 aa).

Residues 1–11 (MAPTAVYTQKD) show a composition bias toward polar residues. The tract at residues 1–24 (MAPTAVYTQKDSPSSSQPSSKGPA) is disordered. The tract at residues 1 to 196 (MAPTAVYTQK…TVTSAPSVPL (196 aa)) is N-terminal SAM-like domain. A linker region spans residues 196–237 (LLLRKRGDPAKKKALWALTTDASASPSTKIDADALLTAEDKA). The [2Fe-2S] cluster site is built by Cys-243, Cys-257, Cys-260, and Cys-262. Residues 243–262 (CAPVDRSAPRRKKACKNCSC) are fe-S binding site A. Residues Cys-315, Cys-318, Cys-326, and Cys-329 each coordinate [4Fe-4S] cluster. Short sequence motifs (cx2C motif) lie at residues 315-318 (CGSC) and 326-329 (CAGC). The segment at 315–329 (CGSCFLGDAFRCAGC) is fe-S binding site B.

This sequence belongs to the anamorsin family. As to quaternary structure, monomer. Interacts with TAH18. Interacts with MIA40. It depends on [2Fe-2S] cluster as a cofactor. Requires [4Fe-4S] cluster as cofactor.

Its subcellular location is the cytoplasm. It is found in the mitochondrion intermembrane space. In terms of biological role, component of the cytosolic iron-sulfur (Fe-S) protein assembly (CIA) machinery required for the maturation of extramitochondrial Fe-S proteins. Part of an electron transfer chain functioning in an early step of cytosolic Fe-S biogenesis, facilitating the de novo assembly of a [4Fe-4S] cluster on the scaffold complex CFD1-NBP35. Electrons are transferred to DRE2 from NADPH via the FAD- and FMN-containing protein TAH18. TAH18-DRE2 are also required for the assembly of the diferric tyrosyl radical cofactor of ribonucleotide reductase (RNR), probably by providing electrons for reduction during radical cofactor maturation in the catalytic small subunit RNR2. The polypeptide is Fe-S cluster assembly protein DRE2 (Coprinopsis cinerea (strain Okayama-7 / 130 / ATCC MYA-4618 / FGSC 9003) (Inky cap fungus)).